The primary structure comprises 120 residues: Large ribosomal subunit protein bL12 (120 aa).

This sequence belongs to the bacterial ribosomal protein bL12 family. As to quaternary structure, homodimer. Part of the ribosomal stalk of the 50S ribosomal subunit. Forms a multimeric L10(L12)X complex, where L10 forms an elongated spine to which 2 to 4 L12 dimers bind in a sequential fashion. Binds GTP-bound translation factors.

Functionally, forms part of the ribosomal stalk which helps the ribosome interact with GTP-bound translation factors. Is thus essential for accurate translation. The chain is Large ribosomal subunit protein bL12 from Brevibacillus brevis (strain 47 / JCM 6285 / NBRC 100599).